The chain runs to 94 residues: Pyrimidine/purine nucleoside phosphorylase (94 aa).

Belongs to the nucleoside phosphorylase PpnP family.

It carries out the reaction a purine D-ribonucleoside + phosphate = a purine nucleobase + alpha-D-ribose 1-phosphate. It catalyses the reaction adenosine + phosphate = alpha-D-ribose 1-phosphate + adenine. The catalysed reaction is cytidine + phosphate = cytosine + alpha-D-ribose 1-phosphate. The enzyme catalyses guanosine + phosphate = alpha-D-ribose 1-phosphate + guanine. It carries out the reaction inosine + phosphate = alpha-D-ribose 1-phosphate + hypoxanthine. It catalyses the reaction thymidine + phosphate = 2-deoxy-alpha-D-ribose 1-phosphate + thymine. The catalysed reaction is uridine + phosphate = alpha-D-ribose 1-phosphate + uracil. The enzyme catalyses xanthosine + phosphate = alpha-D-ribose 1-phosphate + xanthine. Functionally, catalyzes the phosphorolysis of diverse nucleosides, yielding D-ribose 1-phosphate and the respective free bases. Can use uridine, adenosine, guanosine, cytidine, thymidine, inosine and xanthosine as substrates. Also catalyzes the reverse reactions. This chain is Pyrimidine/purine nucleoside phosphorylase, found in Pseudomonas entomophila (strain L48).